Reading from the N-terminus, the 156-residue chain is Endogenous retrovirus group K member 21 Pro protein (156 aa).

In terms of domain architecture, Peptidase A2 spans 21-96; it reads FEGLVDTGAD…IPLNLWGRDL (76 aa). Residue D26 is part of the active site. The region spanning 111–156 is the G-patch domain; sequence YSPTSQKIMTKMGYIPGKGLGKNEDGIKVPVEAKINQKREGIGYPF.

The protein belongs to the peptidase A2 family. HERV class-II K(HML-2) subfamily. Active as a homodimer. Autoproteolytically processed at the N-terminus. Expected C-terminal autoprocessing not detected. The sequence shown is that of the processed Pro protein.

The enzyme catalyses Processing at the authentic HIV-1 PR recognition site and release of the mature p17 matrix and the p24 capsid protein, as a result of the cleavage of the -SQNY-|-PIVQ- cleavage site.. Functionally, retroviral proteases have roles in the processing of the primary translation products and the maturation of the viral particle. Endogenous Pro proteins may have kept, lost or modified their original function during evolution. This Homo sapiens (Human) protein is Endogenous retrovirus group K member 21 Pro protein (ERVK-21).